The sequence spans 139 residues: D-ribose pyranase (139 aa).

The Proton donor role is filled by histidine 20. Substrate contacts are provided by residues aspartate 28, histidine 106, and 128–130; that span reads YAN.

It belongs to the RbsD / FucU family. RbsD subfamily. As to quaternary structure, homodecamer.

Its subcellular location is the cytoplasm. It carries out the reaction beta-D-ribopyranose = beta-D-ribofuranose. It participates in carbohydrate metabolism; D-ribose degradation; D-ribose 5-phosphate from beta-D-ribopyranose: step 1/2. In terms of biological role, catalyzes the interconversion of beta-pyran and beta-furan forms of D-ribose. The chain is D-ribose pyranase from Escherichia coli O45:K1 (strain S88 / ExPEC).